The sequence spans 602 residues: Glutamine--fructose-6-phosphate aminotransferase [isomerizing] (602 aa).

Cysteine 2 (nucleophile; for GATase activity) is an active-site residue. A Glutamine amidotransferase type-2 domain is found at 2–217 (CGIVGVVGNT…DQELVIVKAD (216 aa)). The disordered stretch occupies residues 67-87 (IGHTRWATHGKPTEDNAHPHR). Basic and acidic residues predominate over residues 77–87 (KPTEDNAHPHR). 2 consecutive SIS domains span residues 283–422 (IIKA…ANGN) and 455–592 (VREL…VDKP). Lysine 597 (for Fru-6P isomerization activity) is an active-site residue.

Homodimer.

Its subcellular location is the cytoplasm. It catalyses the reaction D-fructose 6-phosphate + L-glutamine = D-glucosamine 6-phosphate + L-glutamate. Catalyzes the first step in hexosamine metabolism, converting fructose-6P into glucosamine-6P using glutamine as a nitrogen source. This is Glutamine--fructose-6-phosphate aminotransferase [isomerizing] from Streptococcus pneumoniae serotype 4 (strain ATCC BAA-334 / TIGR4).